Consider the following 394-residue polypeptide: Phosphoglycerate kinase (394 aa).

Residues D21 to N23, R36, H59 to R62, R118, and R151 contribute to the substrate site. S183 is subject to Phosphoserine. Residues K201 and G292 each coordinate ATP. Residue T299 is modified to Phosphothreonine. Residues E323 and G350–S353 each bind ATP.

This sequence belongs to the phosphoglycerate kinase family. Monomer.

The protein resides in the cytoplasm. It catalyses the reaction (2R)-3-phosphoglycerate + ATP = (2R)-3-phospho-glyceroyl phosphate + ADP. The protein operates within carbohydrate degradation; glycolysis; pyruvate from D-glyceraldehyde 3-phosphate: step 2/5. The chain is Phosphoglycerate kinase (pgk) from Priestia megaterium (strain DSM 319 / IMG 1521) (Bacillus megaterium).